A 673-amino-acid polypeptide reads, in one-letter code: DNA mismatch repair protein MutL (673 aa).

Belongs to the DNA mismatch repair MutL/HexB family.

Its function is as follows. This protein is involved in the repair of mismatches in DNA. It is required for dam-dependent methyl-directed DNA mismatch repair. May act as a 'molecular matchmaker', a protein that promotes the formation of a stable complex between two or more DNA-binding proteins in an ATP-dependent manner without itself being part of a final effector complex. This is DNA mismatch repair protein MutL from Ehrlichia chaffeensis (strain ATCC CRL-10679 / Arkansas).